The chain runs to 545 residues: Esterase-5B (545 aa).

The first 19 residues, 1–19 (MYCEKLILLLGCFWISSSA), serve as a signal peptide directing secretion. A disulfide bond links cysteine 84 and cysteine 103. N-linked (GlcNAc...) asparagine glycosylation is present at asparagine 113. Serine 207 acts as the Acyl-ester intermediate in catalysis. An intrachain disulfide couples cysteine 259 to cysteine 271. The N-linked (GlcNAc...) asparagine glycan is linked to asparagine 421. The active-site Charge relay system is histidine 467. Asparagine 507 is a glycosylation site (N-linked (GlcNAc...) asparagine). Cysteines 515 and 536 form a disulfide.

The protein belongs to the type-B carboxylesterase/lipase family. In terms of assembly, homodimer.

It localises to the secreted. It catalyses the reaction a carboxylic ester + H2O = an alcohol + a carboxylate + H(+). The polypeptide is Esterase-5B (Est-5B) (Drosophila miranda (Fruit fly)).